Reading from the N-terminus, the 71-residue chain is General transcription factor IIH subunit 5 (71 aa).

T69 bears the Phosphothreonine mark.

The protein belongs to the TFB5 family. In terms of assembly, component of the 7-subunit TFIIH core complex composed of XPB/ERCC3, XPD/ERCC2, GTF2H1, GTF2H2, GTF2H3, GTF2H4 and GTF2H5, which is active in NER. The core complex associates with the 3-subunit CDK-activating kinase (CAK) module composed of CCNH/cyclin H, CDK7 and MNAT1 to form the 10-subunit holoenzyme (holo-TFIIH) active in transcription. Part of TBP-based Pol II pre-initiation complex (PIC), in which Pol II core assembles with general transcription factors and other specific initiation factors including GTF2E1, GTF2E2, GTF2F1, GTF2F2, TCEA1, ERCC2, ERCC3, GTF2H2, GTF2H3, GTF2H4, GTF2H5, GTF2A1, GTF2A2, GTF2B and TBP; this large multi-subunit PIC complex mediates DNA unwinding and targets Pol II core to the transcription start site where the first phosphodiester bond forms.

Its subcellular location is the nucleus. It is found in the cytoplasm. Its function is as follows. Component of the general transcription and DNA repair factor IIH (TFIIH) core complex, which is involved in general and transcription-coupled nucleotide excision repair (NER) of damaged DNA and, when complexed to CAK, in RNA transcription by RNA polymerase II. In NER, TFIIH acts by opening DNA around the lesion to allow the excision of the damaged oligonucleotide and its replacement by a new DNA fragment. In transcription, TFIIH has an essential role in transcription initiation. When the pre-initiation complex (PIC) has been established, TFIIH is required for promoter opening and promoter escape. Phosphorylation of the C-terminal tail (CTD) of the largest subunit of RNA polymerase II by the kinase module CAK controls the initiation of transcription. Necessary for the stability of the TFIIH complex and for the presence of normal levels of TFIIH in the cell. The chain is General transcription factor IIH subunit 5 from Homo sapiens (Human).